Consider the following 94-residue polypeptide: Integration host factor subunit beta (94 aa).

This sequence belongs to the bacterial histone-like protein family. Heterodimer of an alpha and a beta chain.

Its function is as follows. This protein is one of the two subunits of integration host factor, a specific DNA-binding protein that functions in genetic recombination as well as in transcriptional and translational control. The sequence is that of Integration host factor subunit beta (ihfB) from Pasteurella multocida (strain Pm70).